The primary structure comprises 282 residues: Nucleotide-binding protein XCC2806 (282 aa).

5–12 (GLSGSGKS) contributes to the ATP binding site. GTP is bound at residue 57–60 (DVRS).

The protein belongs to the RapZ-like family.

Its function is as follows. Displays ATPase and GTPase activities. The protein is Nucleotide-binding protein XCC2806 of Xanthomonas campestris pv. campestris (strain ATCC 33913 / DSM 3586 / NCPPB 528 / LMG 568 / P 25).